The following is a 561-amino-acid chain: Proline--tRNA ligase (561 aa).

Belongs to the class-II aminoacyl-tRNA synthetase family. ProS type 1 subfamily. As to quaternary structure, homodimer.

It localises to the cytoplasm. The enzyme catalyses tRNA(Pro) + L-proline + ATP = L-prolyl-tRNA(Pro) + AMP + diphosphate. Functionally, catalyzes the attachment of proline to tRNA(Pro) in a two-step reaction: proline is first activated by ATP to form Pro-AMP and then transferred to the acceptor end of tRNA(Pro). As ProRS can inadvertently accommodate and process non-cognate amino acids such as alanine and cysteine, to avoid such errors it has two additional distinct editing activities against alanine. One activity is designated as 'pretransfer' editing and involves the tRNA(Pro)-independent hydrolysis of activated Ala-AMP. The other activity is designated 'posttransfer' editing and involves deacylation of mischarged Ala-tRNA(Pro). The misacylated Cys-tRNA(Pro) is not edited by ProRS. This chain is Proline--tRNA ligase, found in Wigglesworthia glossinidia brevipalpis.